Consider the following 429-residue polypeptide: Histidine--tRNA ligase (429 aa).

The protein belongs to the class-II aminoacyl-tRNA synthetase family. As to quaternary structure, homodimer.

It localises to the cytoplasm. The catalysed reaction is tRNA(His) + L-histidine + ATP = L-histidyl-tRNA(His) + AMP + diphosphate + H(+). The protein is Histidine--tRNA ligase of Pseudomonas paraeruginosa (strain DSM 24068 / PA7) (Pseudomonas aeruginosa (strain PA7)).